The primary structure comprises 516 residues: Gamma-aminobutyrate transaminase 1, mitochondrial (516 aa).

The transit peptide at 1 to 47 (MVIARGLLRSNASSSSSQAINLLKYVTSTGSLQGHTQNLCDASTRHF) directs the protein to the mitochondrion. Polar residues predominate over residues 45–60 (RHFSSVPSPQSNSTEE). The segment at 45–64 (RHFSSVPSPQSNSTEENGFK) is disordered. 171-172 (GS) contacts pyridoxal 5'-phosphate. Tyr-204 lines the substrate pocket. Asp-311 contacts pyridoxal 5'-phosphate. Lys-340 serves as a coordination point for substrate. Lys-340 carries the post-translational modification N6-(pyridoxal phosphate)lysine.

The protein belongs to the class-III pyridoxal-phosphate-dependent aminotransferase family.

Its subcellular location is the mitochondrion. It carries out the reaction 4-aminobutanoate + pyruvate = succinate semialdehyde + L-alanine. The enzyme catalyses 4-aminobutanoate + glyoxylate = succinate semialdehyde + glycine. Transaminase that degrades gamma-amino butyric acid (GABA) and uses pyruvate as amino-group acceptor, but not 2-oxoglutarate. The chain is Gamma-aminobutyrate transaminase 1, mitochondrial from Oryza sativa subsp. indica (Rice).